Consider the following 65-residue polypeptide: Large ribosomal subunit protein bL32 (65 aa).

It belongs to the bacterial ribosomal protein bL32 family.

The polypeptide is Large ribosomal subunit protein bL32 (Metamycoplasma arthritidis (strain 158L3-1) (Mycoplasma arthritidis)).